We begin with the raw amino-acid sequence, 112 residues long: Protein ORF1 (112 aa).

Residues 1 to 10 (MEGTDWSGWG) are compositionally biased toward low complexity. The tract at residues 1–20 (MEGTDWSGWGDDSDFPWPKG) is disordered. The helical transmembrane segment at 51–71 (IAFVILIVSLFVLLLGVLLAC) threads the bilayer.

The protein localises to the host membrane. This is Protein ORF1 from Snake adenovirus serotype 1 (SnAdV-1).